The chain runs to 167 residues: Gametocyte-specific factor 1 (167 aa).

Ser-8 is subject to Phosphoserine. 2 CHHC U11-48K-type zinc fingers span residues 14–41 (LLQC…RKNH) and 48–75 (LATC…DDKS). 8 residues coordinate Zn(2+): Cys-17, His-23, His-33, Cys-37, Cys-51, His-57, His-67, and Cys-71.

This sequence belongs to the UPF0224 (FAM112) family. As to expression, expressed abundantly in adult testis, at moderate levels in unfertilized eggs and ovaries and weakly in embryonic stem cells.

It is found in the cytoplasm. Its function is as follows. Required for spermatogenesis and is involved in the suppression of retrotransposon transcription in male germ cells. This Mus musculus (Mouse) protein is Gametocyte-specific factor 1.